The sequence spans 254 residues: Type III pantothenate kinase (254 aa).

Asp6–Thr13 lines the ATP pocket. Substrate-binding positions include Tyr100 and Gly107–Arg110. The active-site Proton acceptor is the Asp109. Residue Asp129 coordinates K(+). Residue Thr132 participates in ATP binding. Residue Thr184 coordinates substrate.

Belongs to the type III pantothenate kinase family. In terms of assembly, homodimer. It depends on NH4(+) as a cofactor. The cofactor is K(+).

It localises to the cytoplasm. The enzyme catalyses (R)-pantothenate + ATP = (R)-4'-phosphopantothenate + ADP + H(+). It participates in cofactor biosynthesis; coenzyme A biosynthesis; CoA from (R)-pantothenate: step 1/5. In terms of biological role, catalyzes the phosphorylation of pantothenate (Pan), the first step in CoA biosynthesis. The protein is Type III pantothenate kinase of Anaeromyxobacter dehalogenans (strain 2CP-C).